We begin with the raw amino-acid sequence, 536 residues long: G-protein coupled receptor Mth2 (536 aa).

5 disulfides stabilise this stretch: Cys17–Cys71, Cys73–Cys78, Cys82–Cys177, Cys83–Cys96, and Cys138–Cys197. N-linked (GlcNAc...) asparagine glycosylation is found at Asn24 and Asn33. N-linked (GlcNAc...) asparagine glycosylation is found at Asn103, Asn113, Asn118, Asn159, and Asn184. A helical membrane pass occupies residues 212-232 (YAMMFSIPFMMLTIAVYLLIP). Over 233–241 (ELRNQHGKS) the chain is Cytoplasmic. The chain crosses the membrane as a helical span at residues 242-262 (LVCYLIGLTVGYSSLCYVQLY). Topologically, residues 263–273 (QVDATGVTCKV) are extracellular. The helical transmembrane segment at 274-294 (FGYTAYFFFMGAYMWLSVISF) threads the bilayer. The Cytoplasmic portion of the chain corresponds to 295-314 (DLWHNFRGTRGINRFQEKKR). A helical transmembrane segment spans residues 315-335 (FLFYSLYSWGIALVFLAFTYC). The Extracellular segment spans residues 336–365 (AQQLSNLPDNLKPGIGDGVYCWLDMSNWAA). A helical transmembrane segment spans residues 366-386 (MIYFYGPILAIVVANTIMFIM). Over 387–417 (TAIKIHGVQREMARIIASENSTKNLRTEKDK) the chain is Cytoplasmic. A helical transmembrane segment spans residues 418–438 (FGLFLRLFLIMGITWLTELIS). Residues 439–449 (YFVGSDKGWSK) lie on the Extracellular side of the membrane. The chain crosses the membrane as a helical span at residues 450 to 470 (LFYISDLANAMQGFLIFMLFV). At 471–536 (MKKKVKHLIT…VDPQKTTIFR (66 aa)) the chain is on the cytoplasmic side. The tract at residues 487–506 (RDGSNQRQSQYSTKTTSSSV) is disordered. The segment covering 492 to 505 (QRQSQYSTKTTSSS) has biased composition (low complexity).

This sequence belongs to the G-protein coupled receptor 2 family. Mth subfamily. As to quaternary structure, homodimer.

The protein resides in the cell membrane. Its function is as follows. Involved in biological aging and stress response. Essential for adult survival. The polypeptide is G-protein coupled receptor Mth2 (mth2) (Drosophila simulans (Fruit fly)).